The chain runs to 199 residues: MSSENCFVAENSSLHPESGQENDATSPHFSTRHEGSFQVPVLCAVMNVVFITILIIALIALSVGQYNCPGQYTFSMPSDSHVSSCSEDWVGYQRKCYFISTVKRSWTSAQNACSEHGATLAVIDSEKDMNFLKRYAGREEHWVGLKKEPGHPWKWSNGKEFNNWFNVTGSDKCVFLKNTEVSSMECEKNLYWICNKPYK.

Positions 1 to 29 (MSSENCFVAENSSLHPESGQENDATSPHF) are disordered. The Cytoplasmic portion of the chain corresponds to 1–40 (MSSENCFVAENSSLHPESGQENDATSPHFSTRHEGSFQVP). The helical; Signal-anchor for type II membrane protein transmembrane segment at 41-61 (VLCAVMNVVFITILIIALIAL) threads the bilayer. Over 62–199 (SVGQYNCPGQ…LYWICNKPYK (138 aa)) the chain is Extracellular. Cystine bridges form between Cys85–Cys96, Cys113–Cys194, and Cys173–Cys186. A C-type lectin domain is found at 92 to 195 (YQRKCYFIST…CEKNLYWICN (104 aa)). Residue Asn166 is glycosylated (N-linked (GlcNAc...) asparagine).

As to quaternary structure, homodimer; disulfide-linked. Interacts with S100A8 and S100A9. Interacts with galactin-1/LGALS1. Interacts with S1PR1; this interaction mediates S1PR1 degradation. Post-translationally, constitutive Ser/Thr phosphorylation in both mature thymocytes and activated T-lymphocytes. Expressed on the surface of activated T-cells, B-cells, natural killer cells, neutrophils, eosinophils, epidermal Langerhans cells and platelets.

It is found in the cell membrane. Its function is as follows. Transmembrane protein expressed mainly on T-cells resident in mucosa that plays an essential role in immune cell homeostasis. Rapidly expressed on the surface of platelets, T-lymphocytes and NK cells upon activation by various stimuli, such as antigen recognition or cytokine signaling, stimulates different signaling pathways in different cell types. Negatively regulates Th17 cell differentiation through its carbohydrate dependent interaction with galectin-1/LGALS1 present on immature dendritic cells. Association of CD69 cytoplasmic tail with the JAK3/STAT5 signaling pathway regulates the transcription of RORgamma/RORC and, consequently, differentiation toward the Th17 lineage. Also acts via the S100A8/S100A9 complex present on peripheral blood mononuclear cells to promote the conversion of naive CD4 T-cells into regulatory T-cells. Acts as an oxidized low-density lipoprotein (oxLDL) receptor in CD4 T-lymphocytes and negatively regulates the inflammatory response by inducing the expression of PDCD1 through the activation of NFAT. Participates in adipose tissue-derived mesenchymal stem cells (ASCs)-mediated protection against P.aeruginosa infection. Mechanistically, specifically recognizes P.aeruginosa to promote ERK1 activation, followed by granulocyte-macrophage colony-stimulating factor (GM-CSF) and other inflammatory cytokines secretion. In eosinophils, induces IL-10 production through the ERK1/2 pathway. Negatively regulates the chemotactic responses of effector lymphocytes and dendritic cells (DCs) to sphingosine 1 phosphate/S1P by acting as a S1PR1 receptor agonist and facilitating the internalization and degradation of the receptor. The chain is Early activation antigen CD69 (CD69) from Homo sapiens (Human).